The sequence spans 253 residues: 3-deoxy-manno-octulosonate cytidylyltransferase (253 aa).

The protein belongs to the KdsB family.

Its subcellular location is the cytoplasm. The enzyme catalyses 3-deoxy-alpha-D-manno-oct-2-ulosonate + CTP = CMP-3-deoxy-beta-D-manno-octulosonate + diphosphate. It functions in the pathway nucleotide-sugar biosynthesis; CMP-3-deoxy-D-manno-octulosonate biosynthesis; CMP-3-deoxy-D-manno-octulosonate from 3-deoxy-D-manno-octulosonate and CTP: step 1/1. The protein operates within bacterial outer membrane biogenesis; lipopolysaccharide biosynthesis. Functionally, activates KDO (a required 8-carbon sugar) for incorporation into bacterial lipopolysaccharide in Gram-negative bacteria. The sequence is that of 3-deoxy-manno-octulosonate cytidylyltransferase from Proteus mirabilis (strain HI4320).